The following is a 345-amino-acid chain: D-fructose 1,6-bisphosphatase class 2/sedoheptulose 1,7-bisphosphatase (345 aa).

Mn(2+) contacts are provided by Asp-33, Glu-57, Asp-97, and Glu-100. Substrate-binding positions include 100 to 102, Tyr-131, 176 to 178, and 198 to 200; these read EGT, RPR, and DGD. Position 225 (Glu-225) interacts with Mn(2+).

The protein belongs to the FBPase class 2 family. As to quaternary structure, homotetramer. The cofactor is Mn(2+).

The catalysed reaction is beta-D-fructose 1,6-bisphosphate + H2O = beta-D-fructose 6-phosphate + phosphate. The enzyme catalyses D-sedoheptulose 1,7-bisphosphate + H2O = D-sedoheptulose 7-phosphate + phosphate. It functions in the pathway carbohydrate biosynthesis; Calvin cycle. Catalyzes the hydrolysis of fructose 1,6-bisphosphate (Fru 1,6-P2) and sedoheptulose 1,7-bisphosphate (Sed 1,7-P2) to fructose 6-phosphate and sedoheptulose 7-phosphate, respectively. The chain is D-fructose 1,6-bisphosphatase class 2/sedoheptulose 1,7-bisphosphatase from Synechocystis sp. (strain ATCC 27184 / PCC 6803 / Kazusa).